The sequence spans 132 residues: Regulator of ribonuclease activity B (132 aa).

This sequence belongs to the RraB family. In terms of assembly, interacts with the C-terminal region of Rne.

It localises to the cytoplasm. Functionally, globally modulates RNA abundance by binding to RNase E (Rne) and regulating its endonucleolytic activity. Can modulate Rne action in a substrate-dependent manner by altering the composition of the degradosome. The protein is Regulator of ribonuclease activity B of Alteromonas mediterranea (strain DSM 17117 / CIP 110805 / LMG 28347 / Deep ecotype).